The chain runs to 442 residues: MTNSSPPFSTIHQFFPGNTFLNFESVRILSTAPYGGCDAAEFLTAIAAINPKDPQTWADAWSHMAHLAETMAEEALSRGDVVAARDGFLRASSYTRASGYLYINGPTLDEHHPLAFEISKKVQSLFRRALPFLDCDVHVVEIPYVVDSPERKEVMLPGYLYLPNAQHRLPDGKIPVLLNTGGADSVQEELYYIHPQGGHTRGYAVLTFEGPGQGIVLREHGLHMRPDWEVTGWKGYSSTLKREVGVELDLDRIAVAGASMGGYYALRAAKDSRIKACVAIDPFYDMWDFGTKHISGLFMSAWTGGWIGDDWVDRIIRLGMRTNFQLRWEVGVTAAFWGIASPAKILKEMSKYSLKGGYLEKVQCPVLVTGAGKSLYFDTEEHTMKVFDDLGHLEERWRRVWMPNRPEEGGLQAKIGAFGLANMKAYGFLDEVFGIRRVTVES.

Ser259 functions as the Nucleophile in the catalytic mechanism.

It belongs to the AB hydrolase superfamily. FUS2 hydrolase family. Homodimer.

It participates in mycotoxin biosynthesis. Functionally, hydrolyase; part of the gene cluster that mediates the biosynthesis of the mycotoxins phomacins, leucine-derived cytochalasans with potent actin polymerization-inhibitory activities and monocot-specific antigerminative activities. The first step in the pathway is catalyzed by the hybrid PKS-NRPS phmA, assisted by the enoyl reductase phmE, that are responsible for fusion of the leucine precursor and the polyketide backbone to produce a 2-pyrrolidone intermediate. The polyketide synthase module (PKS) of phmA is responsible for the synthesis of the polyketide backbone and the downstream nonribosomal peptide synthetase (NRPS) amidates the carboxyl end of the polyketide with the leucine precursor. Because phmA lacks a designated enoylreductase (ER) domain, the required activity is provided the enoyl reductase phmE. Reduction by the hydrolyase phmG, followed by dehydration and intra-molecular Diels-Alder cyclization by the Diels-Alderase phmD then yield the required isoindolone-fused macrocycle. A number of oxidative steps catalyzed by the tailoring cytochrome P450 monooxygenase phmB, the FAD-linked oxidoreductase phmC and the short-chain dehydrogenase/reductase phmF, are further required to afford the final products, phomacin D and phomacin E. The polypeptide is Hydrolase phmG (Phaeosphaeria nodorum (strain SN15 / ATCC MYA-4574 / FGSC 10173) (Glume blotch fungus)).